Consider the following 1356-residue polypeptide: Probable aldehyde oxidase 3 (1356 aa).

A 2Fe-2S ferredoxin-type domain is found at 10-97; it reads RAVVVAVNGE…HCAVTTSEGI (88 aa). Positions 49, 54, 57, and 79 each coordinate [2Fe-2S] cluster. The FAD-binding PCMH-type domain maps to 245–437; sequence VVVTGDGWFH…TFQTFRAAPR (193 aa). Residues 552–576 are disordered; sequence NGSFTNGTANGIVDSSPEKHSNVDS.

Belongs to the xanthine dehydrogenase family. In terms of assembly, aldehyde oxidases (AO) are homodimers and heterodimers of AO subunits. [2Fe-2S] cluster serves as cofactor. The cofactor is FAD. Requires Mo-molybdopterin as cofactor.

The enzyme catalyses an aldehyde + O2 + H2O = a carboxylate + H2O2 + H(+). The polypeptide is Probable aldehyde oxidase 3 (Oryza sativa subsp. japonica (Rice)).